The primary structure comprises 271 residues: Plasmanylethanolamine desaturase 1 (271 aa).

The interval 1-25 (MAGAEDAPGRQPELDEDETAEGRRW) is disordered. A run of 3 helical transmembrane segments spans residues 48-68 (WCSV…LLLL), 75-95 (PLVI…SGLV), and 166-186 (LYPW…TNQI). The Histidine box-1 signature appears at 187 to 191 (HKWSH). The Histidine box-2 signature appears at 214 to 218 (HHRIH).

Belongs to the fatty acid desaturase CarF family.

It localises to the endoplasmic reticulum membrane. The enzyme catalyses a 1-(1,2-saturated alkyl)-2-acyl-sn-glycero-3-phosphoethanolamine + 2 Fe(II)-[cytochrome b5] + O2 + 2 H(+) = a 1-O-(1Z-alkenyl)-2-acyl-sn-glycero-3-phosphoethanolamine + 2 Fe(III)-[cytochrome b5] + 2 H2O. The catalysed reaction is a 1-O-hexadecyl-2-acyl-sn-glycero-3-phosphoethanolamine + 2 Fe(II)-[cytochrome b5] + O2 + 2 H(+) = a 1-O-(1Z-hexadecenyl)-2-acyl-sn-glycero-3-phosphoethanolamine + 2 Fe(III)-[cytochrome b5] + 2 H2O. It carries out the reaction a 1-O-octadecyl-2-acyl-sn-glycero-3-phosphoethanolamine + 2 Fe(II)-[cytochrome b5] + O2 + 2 H(+) = a 1-O-(1Z-octadecenyl)-2-acyl-sn-glycero-3-phosphoethanolamine + 2 Fe(III)-[cytochrome b5] + 2 H2O. It catalyses the reaction a 1-O-(9Z-octadecenyl)-2-acyl-sn-glycero-3-phosphoethanolamine + 2 Fe(II)-[cytochrome b5] + O2 + 2 H(+) = a 1-O-(1Z,9Z-octadecadienyl)-2-acyl-sn-glycero-3-phosphoethanolamine + 2 Fe(III)-[cytochrome b5] + 2 H2O. The protein operates within lipid metabolism; fatty acid metabolism. In terms of biological role, plasmanylethanolamine desaturase involved in plasmalogen biogenesis in the endoplasmic reticulum membrane. Plasmalogens are glycerophospholipids with a hydrocarbon chain linked by a vinyl ether bond at the glycerol sn-1 position, and are involved in antioxidative and signaling mechanisms. This is Plasmanylethanolamine desaturase 1 from Mus musculus (Mouse).